Reading from the N-terminus, the 149-residue chain is UPF0178 protein Lmo1456 (149 aa).

This sequence belongs to the UPF0178 family.

This is UPF0178 protein Lmo1456 from Listeria monocytogenes serovar 1/2a (strain ATCC BAA-679 / EGD-e).